The chain runs to 196 residues: APGW-amide-related neuropeptide (196 aa).

An N-terminal signal peptide occupies residues 1–22 (METLNIFLVIFSLLGTIIIASS). Positions 23-48 (SDESSERKKRDLDTIDDTNNDFLTAD) are excised as a propeptide. At tryptophan 54 the chain carries Tryptophan amide. Positions 58–68 (SFDDDILNNLD) are excised as a propeptide. Tryptophan 74 carries the tryptophan amide modification. A propeptide spanning residues 78–88 (SDMLFDSEEIE) is cleaved from the precursor. Tryptophan 94 carries the post-translational modification Tryptophan amide. Positions 98 to 105 (SSSLYDDE) are excised as a propeptide. Tryptophan 111 is modified (tryptophan amide). Residues 115-129 (SSALLDDLSLYNSIV) constitute a propeptide that is removed on maturation. Residue tryptophan 135 is modified to Tryptophan amide. Residues 139 to 146 (SDTFKVDI) constitute a propeptide that is removed on maturation. Tryptophan amide occurs at positions 151 and 158. The propeptide occupies 162–196 (SGPNMCMDFQDEILQLYKLLNEAEKLHSECEALNI).

As to expression, expressed in cerebral, pedal and visceral ganglia. TPGW-amide is found in pedal and cerebral ganglia and in shell adductor muscle (at protein level). RPGW-amide and KPGW-amide are found in pedal retractor muscle, ABRM and shell adductor muscle (at protein level).

Its function is as follows. RPGW-amide, KPGW-amide and TPGW-amide tetrapeptides are involved in control of muscle contraction and may function as neurotransmitters. These peptides increase tension of the pedal retractor muscle and, in conjunction with FMRF-amide, increase peak tension of the anterior byssus retractor muscle (ABRM). This is APGW-amide-related neuropeptide from Mytilus edulis (Blue mussel).